Here is an 896-residue protein sequence, read N- to C-terminus: Vacuolar zinc transporter TgZnT (896 aa).

At 1–472 (MPFSCFVFSQ…ETGTQRARRK (472 aa)) the chain is on the cytoplasmic side. The segment covering 82 to 91 (VLSSRGDESV) has biased composition (basic and acidic residues). Disordered regions lie at residues 82–104 (VLSS…SPGF), 205–227 (MKEI…RPCA), and 255–329 (SSSC…SSAS). Low complexity-rich tracts occupy residues 210–225 (SPRS…SSRP) and 255–266 (SSSCCSRSNSSS). The span at 303 to 322 (VHERRAEATCCAPRDRHGGD) shows a compositional bias: basic and acidic residues. The helical transmembrane segment at 473 to 493 (LVMASMVCCVFMFVEIVAGVL) threads the bilayer. The Vacuolar portion of the chain corresponds to 494 to 502 (ANSLALMTD). The helical transmembrane segment at 503 to 523 (ASHLLSDLCAFLISLFALWVS) threads the bilayer. At 524 to 539 (ELKGNPSMSFGYHRAE) the chain is on the cytoplasmic side. The chain crosses the membrane as a helical span at residues 540–560 (ILGALLSVFLIWVLTAVLIYA). Over 561-573 (ACFRLVDPPQVDG) the chain is Vacuolar. Residues 574–594 (ELMFWTALLGTLANLFMTHIL) traverse the membrane as a helical segment. Residues 595–737 (KVHSHGIGQV…YENMNLRAAY (143 aa)) are Cytoplasmic-facing. Residues 621–707 (LQASSSSPEK…RPFSASSAGS (87 aa)) are disordered. Positions 656–680 (RDAEAGRDAEAGRDAEAGRDAETGR) are enriched in basic and acidic residues. Residues 738–758 (IHALGDLLQNIGVMIASALIW) form a helical membrane-spanning segment. Residues 759-762 (WRPD) lie on the Vacuolar side of the membrane. Residues 763-783 (WAIADPICTFIFSIFVLFTTL) traverse the membrane as a helical segment. At 784 to 896 (SILKEALNVL…CSDPMKVFRR (113 aa)) the chain is on the cytoplasmic side.

The protein belongs to the cation diffusion facilitator (CDF) transporter (TC 2.A.4) family. SLC30A subfamily.

It localises to the vacuole membrane. Its subcellular location is the cytoplasmic vesicle membrane. In terms of biological role, vacuolar zinc transporter that is probably involved in the transfer of zinc ions from the cytosol to the vacuole for intracellular storage. Plays an essential role in extracellular zinc tolerance. The polypeptide is Vacuolar zinc transporter TgZnT (Toxoplasma gondii (strain ATCC 50853 / GT1)).